Consider the following 139-residue polypeptide: 3-hydroxyacyl-[acyl-carrier-protein] dehydratase FabZ (139 aa).

Residue His46 is part of the active site.

The protein belongs to the thioester dehydratase family. FabZ subfamily.

It localises to the cytoplasm. The enzyme catalyses a (3R)-hydroxyacyl-[ACP] = a (2E)-enoyl-[ACP] + H2O. In terms of biological role, involved in unsaturated fatty acids biosynthesis. Catalyzes the dehydration of short chain beta-hydroxyacyl-ACPs and long chain saturated and unsaturated beta-hydroxyacyl-ACPs. The polypeptide is 3-hydroxyacyl-[acyl-carrier-protein] dehydratase FabZ (Streptococcus pyogenes serotype M1).